The following is a 273-amino-acid chain: Undecaprenyl-diphosphatase (273 aa).

8 helical membrane-spanning segments follow: residues 4 to 24, 48 to 68, 89 to 109, 116 to 136, 152 to 172, 193 to 213, 222 to 242, and 252 to 272; these read MELW…FAPV, AANT…VVVF, LNLI…VLFE, LFST…MIAA, ITYK…WPGF, ADFT…LSLL, ADIP…LLAI, and IRLV…YFLY.

Belongs to the UppP family.

It is found in the cell membrane. It carries out the reaction di-trans,octa-cis-undecaprenyl diphosphate + H2O = di-trans,octa-cis-undecaprenyl phosphate + phosphate + H(+). Its function is as follows. Catalyzes the dephosphorylation of undecaprenyl diphosphate (UPP). Confers resistance to bacitracin. The chain is Undecaprenyl-diphosphatase from Geobacillus kaustophilus (strain HTA426).